The primary structure comprises 333 residues: uncharacterized protein (333 aa).

A Radical SAM core domain is found at 67–274 (HFYPTTQVVS…LEMARNLAIE (208 aa)). Residues C82, C86, and C89 each contribute to the [4Fe-4S] cluster site.

It depends on [4Fe-4S] cluster as a cofactor.

This is an uncharacterized protein from Methanocaldococcus jannaschii (strain ATCC 43067 / DSM 2661 / JAL-1 / JCM 10045 / NBRC 100440) (Methanococcus jannaschii).